Reading from the N-terminus, the 921-residue chain is GPI ethanolamine phosphate transferase 1 (921 aa).

Residues 37–57 (PGHVALIAGLYEDVSAVTTGW) form a helical membrane-spanning segment. Residues N69 and N132 are each glycosylated (N-linked (GlcNAc...) asparagine). 10 helical membrane-spanning segments follow: residues 386–406 (ALITIGYLGWVAYALTTVIDL), 418–438 (TLIGTIISTSALTALYASFAI), 441–461 (SPLTYYAYAFFPVFFWEEVYA), 483–503 (FVSLVFNCAVYVGIIESLALG), 509–529 (ILTILFVIGAFWPIAYGFSFL), 533–553 (MALSITWFLSCIAMSTFTLLP), 561–581 (VNMIMLGGALMVLVGIIYLIL), 606–626 (LVGIQIGLTLLAALVTRSSAL), 640–660 (VMGWVVLVVSLLMPLAYRAKP), and 679–699 (FVILTISYEGLFYIAFSAVLV). Positions 715-737 (SANGAARSAPSPAKPHNLETSQT) are disordered. Helical transmembrane passes span 752 to 772 (VALFFFVLFQAAFFSTGNVAS), 795 to 815 (AMLILKLLIPFALISANLGIL), 825 to 845 (ALFMVVMAISDILTLYFFWVV), and 862 to 882 (VIASLLCVFVAALEGVSAMFI).

This sequence belongs to the PIGG/PIGN/PIGO family. PIGN subfamily.

It is found in the endoplasmic reticulum membrane. It functions in the pathway glycolipid biosynthesis; glycosylphosphatidylinositol-anchor biosynthesis. In terms of biological role, ethanolamine phosphate transferase involved in glycosylphosphatidylinositol-anchor biosynthesis. Transfers ethanolamine phosphate to the first alpha-1,4-linked mannose of the glycosylphosphatidylinositol precursor of GPI-anchor. The polypeptide is GPI ethanolamine phosphate transferase 1 (MCD4) (Chaetomium globosum (strain ATCC 6205 / CBS 148.51 / DSM 1962 / NBRC 6347 / NRRL 1970) (Soil fungus)).